Reading from the N-terminus, the 310-residue chain is Ribosomal RNA small subunit methyltransferase H (310 aa).

S-adenosyl-L-methionine-binding positions include 32–34 (GGH), aspartate 52, phenylalanine 79, aspartate 100, and glutamine 107.

The protein belongs to the methyltransferase superfamily. RsmH family.

It is found in the cytoplasm. It carries out the reaction cytidine(1402) in 16S rRNA + S-adenosyl-L-methionine = N(4)-methylcytidine(1402) in 16S rRNA + S-adenosyl-L-homocysteine + H(+). In terms of biological role, specifically methylates the N4 position of cytidine in position 1402 (C1402) of 16S rRNA. The chain is Ribosomal RNA small subunit methyltransferase H from Bacillus anthracis (strain A0248).